The primary structure comprises 208 residues: Large ribosomal subunit protein uL4 (208 aa).

It belongs to the universal ribosomal protein uL4 family. Part of the 50S ribosomal subunit.

One of the primary rRNA binding proteins, this protein initially binds near the 5'-end of the 23S rRNA. It is important during the early stages of 50S assembly. It makes multiple contacts with different domains of the 23S rRNA in the assembled 50S subunit and ribosome. In terms of biological role, forms part of the polypeptide exit tunnel. This chain is Large ribosomal subunit protein uL4, found in Anaplasma marginale (strain Florida).